Consider the following 253-residue polypeptide: Methionine aminopeptidase (253 aa).

Substrate is bound at residue histidine 78. A divalent metal cation-binding residues include aspartate 95, aspartate 106, and histidine 169. Position 176 (histidine 176) interacts with substrate. A divalent metal cation is bound by residues glutamate 206 and glutamate 237.

This sequence belongs to the peptidase M24A family. Methionine aminopeptidase type 1 subfamily. In terms of assembly, monomer. Co(2+) serves as cofactor. Requires Zn(2+) as cofactor. The cofactor is Mn(2+). Fe(2+) is required as a cofactor.

The enzyme catalyses Release of N-terminal amino acids, preferentially methionine, from peptides and arylamides.. Removes the N-terminal methionine from nascent proteins. The N-terminal methionine is often cleaved when the second residue in the primary sequence is small and uncharged (Met-Ala-, Cys, Gly, Pro, Ser, Thr, or Val). Requires deformylation of the N(alpha)-formylated initiator methionine before it can be hydrolyzed. This chain is Methionine aminopeptidase, found in Helicobacter pylori (strain J99 / ATCC 700824) (Campylobacter pylori J99).